Consider the following 514-residue polypeptide: Serine--tRNA ligase, cytoplasmic (514 aa).

At Met-1 the chain carries N-acetylmethionine. The interval 9–61 is interaction with tRNA; it reads RVDKGGDPALIRETQEKRFKDPGLVDQLVKADSEWRRCRFRADNLNKLKNLCS. Position 241 is a phosphoserine (Ser-241). The L-serine site is built by Thr-271 and Arg-302. ATP-binding positions include 302-304 and 318-321; these read RQE and VHQF. Lys-323 is modified (N6-acetyllysine). Position 325 (Glu-325) interacts with L-serine. 391–394 is a binding site for ATP; that stretch reads ELVS. Asn-427 serves as a coordination point for L-serine. A disordered region spans residues 473–514; that stretch reads PAPIEQEPSKKQKKQHEGSKKKAAARDVTLENRLQNMEVTDA. The segment covering 479–502 has biased composition (basic and acidic residues); the sequence is EPSKKQKKQHEGSKKKAAARDVTL. The Nuclear localization signal signature appears at 482-494; it reads KKQKKQHEGSKKK. A compositionally biased stretch (polar residues) spans 504-514; sequence NRLQNMEVTDA.

It belongs to the class-II aminoacyl-tRNA synthetase family. Type-1 seryl-tRNA synthetase subfamily. As to quaternary structure, homodimer. The tRNA molecule may bind across the dimer. Interacts with SIRT2. Interacts with METTL6; interaction is required for the tRNA N(3)-methylcytidine methyltransferase activity of METTL6. Brain.

The protein resides in the cytoplasm. It is found in the nucleus. It carries out the reaction tRNA(Ser) + L-serine + ATP = L-seryl-tRNA(Ser) + AMP + diphosphate + H(+). It catalyses the reaction tRNA(Sec) + L-serine + ATP = L-seryl-tRNA(Sec) + AMP + diphosphate + H(+). It participates in aminoacyl-tRNA biosynthesis; selenocysteinyl-tRNA(Sec) biosynthesis; L-seryl-tRNA(Sec) from L-serine and tRNA(Sec): step 1/1. Its function is as follows. Catalyzes the attachment of serine to tRNA(Ser) in a two-step reaction: serine is first activated by ATP to form Ser-AMP and then transferred to the acceptor end of tRNA(Ser). Is probably also able to aminoacylate tRNA(Sec) with serine, to form the misacylated tRNA L-seryl-tRNA(Sec), which will be further converted into selenocysteinyl-tRNA(Sec). In the nucleus, binds to the VEGFA core promoter and prevents MYC binding and transcriptional activation by MYC. Recruits SIRT2 to the VEGFA promoter, promoting deacetylation of histone H4 at 'Lys-16' (H4K16). Thereby, inhibits the production of VEGFA and sprouting angiogenesis mediated by VEGFA. The chain is Serine--tRNA ligase, cytoplasmic from Homo sapiens (Human).